The chain runs to 520 residues: UvrABC system protein C (520 aa).

Residues 11 to 89 (EEPGCYQFKD…IKKYQPKYNI (79 aa)) enclose the GIY-YIG domain. In terms of domain architecture, UVR spans 195–230 (QDLIYDLRKEMETFAAAEEYEKALVIRDRIAAIENL).

The protein belongs to the UvrC family. In terms of assembly, interacts with UvrB in an incision complex.

The protein resides in the cytoplasm. Its function is as follows. The UvrABC repair system catalyzes the recognition and processing of DNA lesions. UvrC both incises the 5' and 3' sides of the lesion. The N-terminal half is responsible for the 3' incision and the C-terminal half is responsible for the 5' incision. The polypeptide is UvrABC system protein C (Methanospirillum hungatei JF-1 (strain ATCC 27890 / DSM 864 / NBRC 100397 / JF-1)).